We begin with the raw amino-acid sequence, 405 residues long: Tryptophan synthase beta chain (405 aa).

Position 98 is an N6-(pyridoxal phosphate)lysine (K98).

Belongs to the TrpB family. In terms of assembly, tetramer of two alpha and two beta chains. Pyridoxal 5'-phosphate is required as a cofactor.

The catalysed reaction is (1S,2R)-1-C-(indol-3-yl)glycerol 3-phosphate + L-serine = D-glyceraldehyde 3-phosphate + L-tryptophan + H2O. The protein operates within amino-acid biosynthesis; L-tryptophan biosynthesis; L-tryptophan from chorismate: step 5/5. In terms of biological role, the beta subunit is responsible for the synthesis of L-tryptophan from indole and L-serine. This is Tryptophan synthase beta chain from Xanthomonas campestris pv. campestris (strain 8004).